A 497-amino-acid chain; its full sequence is MSQVIQYSEADLLYLSKSPLIKKPENLPEWILPEAMKADRERHIRQEKEMKRHDDDGRQYQSDRKFAKSKHDDIILGPPKLSFASSNENGRSVGRHDDLLSLGNVYNGVASLRYRNGASVSRSSSIGHSGSTAPWSSVGRHNRKKDNEHRDEMEGLEKVMKQRAGNTGPLVANSTEEFEAWKRMMKASSGEAGAGNVITPGVTSTTGAPSGKASLSRAASNSSTSARAGISVDSLFGKRSAAQAMATVVPSVSTPGGTPPRFASPALTVESMVHAAPSTTTSSRFSKFFNGLAGPETSKTSTPNMSNNPSPRVANTVVSPAPIPTIGSATIDKDAEGFQRVLAMLGRQASSTTGSPKVALSQMPQVNVNPSNQDLASVKQPSGFSPPSAVAPPPGLGNHNFSNDDSSFFRSLMTSDTRSVPPPPGFSTNAPKAVKSPEISAPPGLYRGLSSGASIPSAPPGFGYQQPSFPYSPGFPPSAYNQNRTGYGFPDTSRPPH.

Residues 44-74 (IRQEKEMKRHDDDGRQYQSDRKFAKSKHDDI) show a composition bias toward basic and acidic residues. Disordered stretches follow at residues 44 to 95 (IRQE…SVGR), 120 to 151 (VSRSSSIGHSGSTAPWSSVGRHNRKKDNEHRD), and 195 to 227 (GNVITPGVTSTTGAPSGKASLSRAASNSSTSAR). Over residues 120–131 (VSRSSSIGHSGS) the composition is skewed to low complexity. Phosphoserine is present on residues Ser123, Ser125, and Ser131. Position 132 is a phosphothreonine (Thr132). Low complexity predominate over residues 213-227 (ASLSRAASNSSTSAR). Thr258 is modified (phosphothreonine). A Phosphoserine modification is found at Ser310. The segment covering 367 to 385 (NVNPSNQDLASVKQPSGFS) has biased composition (polar residues). The segment at 367-497 (NVNPSNQDLA…GFPDTSRPPH (131 aa)) is disordered. The segment covering 400 to 409 (NFSNDDSSFF) has biased composition (low complexity). At Ser436 the chain carries Phosphoserine. Residues 448–472 (GLSSGASIPSAPPGFGYQQPSFPYS) are compositionally biased toward low complexity.

The protein localises to the cytoplasm. The protein resides in the nucleus. This is an uncharacterized protein from Schizosaccharomyces pombe (strain 972 / ATCC 24843) (Fission yeast).